A 576-amino-acid chain; its full sequence is Catalase-peroxidase (576 aa).

The tryptophyl-tyrosyl-methioninium (Trp-Tyr) (with M-250) cross-link spans 95-224 (WHAAGSYRAA…LAAVQMGLIY (130 aa)). Residue His96 is the Proton acceptor of the active site. Residues 224–250 (YVNPEGVNGQPDPARTALHIRETFARM) constitute a cross-link (tryptophyl-tyrosyl-methioninium (Tyr-Met) (with W-95)). Heme b is bound at residue His265.

It belongs to the peroxidase family. Peroxidase/catalase subfamily. In terms of assembly, homotetramer. Heme b serves as cofactor. Post-translationally, formation of the three residue Trp-Tyr-Met cross-link is important for the catalase, but not the peroxidase activity of the enzyme.

The catalysed reaction is H2O2 + AH2 = A + 2 H2O. It carries out the reaction 2 H2O2 = O2 + 2 H2O. In terms of biological role, bifunctional enzyme with both catalase and broad-spectrum peroxidase activity. Also displays NADH oxidase, INH lyase and isonicotinoyl-NAD synthase activities. Important for stationary phase survival. The sequence is that of Catalase-peroxidase (katG) from Rhodobacter capsulatus (Rhodopseudomonas capsulata).